A 523-amino-acid chain; its full sequence is Ribonuclease Y (523 aa).

Residues Thr28 to Ile48 traverse the membrane as a helical segment. The KH domain maps to Thr227–Val312. The 94-residue stretch at Val353–Ala446 folds into the HD domain.

The protein belongs to the RNase Y family.

It is found in the cell membrane. Its function is as follows. Endoribonuclease that initiates mRNA decay. This Clostridium tetani (strain Massachusetts / E88) protein is Ribonuclease Y.